Here is a 301-residue protein sequence, read N- to C-terminus: Outer membrane porin G (301 aa).

Positions M1–A21 are cleaved as a signal peptide. The next 16 beta stranded transmembrane spans lie at W27–Y35, M47–F57, W64–Q72, R89–F98, F104–F112, N129–A136, F149–F158, V172–F182, V186–E195, D201–F209, E213–L222, Y230–W238, N240–E248, F254–F265, L269–W279, and K289–S300.

As to quaternary structure, monomer.

It is found in the cell outer membrane. In terms of biological role, forms channels functionally larger than those of classical porins. May act as a regulator of the RCS-phosphorelay signal transduction pathway. This Escherichia coli (strain K12) protein is Outer membrane porin G (ompG).